A 244-amino-acid polypeptide reads, in one-letter code: Putative ribosomal recycling factor, mitochondrial (244 aa).

This sequence belongs to the RRF family.

The protein localises to the mitochondrion. In terms of biological role, necessary for protein synthesis in mitochondria. Functions as a ribosome recycling factor in mitochondria. This Schizosaccharomyces pombe (strain 972 / ATCC 24843) (Fission yeast) protein is Putative ribosomal recycling factor, mitochondrial (rrf1).